The following is a 1590-amino-acid chain: Pentafunctional AROM polypeptide (1590 aa).

The interval 1 to 400 (MSTANGSSPT…HEPKASSVDD (400 aa)) is 3-dehydroquinate synthase. Residues 49 to 51 (DTN), 96 to 99 (EGSK), 127 to 129 (GGV), and Asp132 each bind NAD(+). Arg143 serves as a coordination point for 7-phospho-2-dehydro-3-deoxy-D-arabino-heptonate. 152–153 (TT) is a binding site for NAD(+). Residues Asp159 and Lys165 each coordinate 7-phospho-2-dehydro-3-deoxy-D-arabino-heptonate. Lys174 is a binding site for NAD(+). A 7-phospho-2-dehydro-3-deoxy-D-arabino-heptonate-binding site is contributed by Asn175. Residues 192–195 (FLNT) and Asn203 each bind NAD(+). Glu207 is a binding site for Zn(2+). 7-phospho-2-dehydro-3-deoxy-D-arabino-heptonate-binding positions include 207–210 (EVIK) and Lys266. Glu276 acts as the Proton acceptor; for 3-dehydroquinate synthase activity in catalysis. 7-phospho-2-dehydro-3-deoxy-D-arabino-heptonate-binding positions include 280–284 (RNLLN) and His287. Zn(2+) is bound at residue His287. The active-site Proton acceptor; for 3-dehydroquinate synthase activity is His291. Residues His303 and Lys372 each contribute to the 7-phospho-2-dehydro-3-deoxy-D-arabino-heptonate site. His303 is a binding site for Zn(2+). The tract at residues 413 to 856 (VQPGVRPGLK…WDVLSGVFGV (444 aa)) is EPSP synthase. Cys838 functions as the For EPSP synthase activity in the catalytic mechanism. Residues 876–1070 (NRSVFVIGMR…KAKPHSFFVS (195 aa)) are shikimate kinase. 883 to 890 (GMRGAGKS) serves as a coordination point for ATP. The 3-dehydroquinase stretch occupies residues 1071-1285 (LTVPNITAHT…AAPGQLTAAE (215 aa)). The active-site Proton acceptor; for 3-dehydroquinate dehydratase activity is His1187. Residue Lys1215 is the Schiff-base intermediate with substrate; for 3-dehydroquinate dehydratase activity of the active site. Residues 1298-1590 (KRKFYLFGKP…IVMNGTSDSS (293 aa)) form a shikimate dehydrogenase region.

The protein in the N-terminal section; belongs to the sugar phosphate cyclases superfamily. Dehydroquinate synthase family. In the 2nd section; belongs to the EPSP synthase family. It in the 3rd section; belongs to the shikimate kinase family. This sequence in the 4th section; belongs to the type-I 3-dehydroquinase family. The protein in the C-terminal section; belongs to the shikimate dehydrogenase family. In terms of assembly, homodimer. It depends on Zn(2+) as a cofactor.

It is found in the cytoplasm. The catalysed reaction is 7-phospho-2-dehydro-3-deoxy-D-arabino-heptonate = 3-dehydroquinate + phosphate. It carries out the reaction 3-dehydroquinate = 3-dehydroshikimate + H2O. The enzyme catalyses shikimate + NADP(+) = 3-dehydroshikimate + NADPH + H(+). It catalyses the reaction shikimate + ATP = 3-phosphoshikimate + ADP + H(+). The catalysed reaction is 3-phosphoshikimate + phosphoenolpyruvate = 5-O-(1-carboxyvinyl)-3-phosphoshikimate + phosphate. It functions in the pathway metabolic intermediate biosynthesis; chorismate biosynthesis; chorismate from D-erythrose 4-phosphate and phosphoenolpyruvate: step 2/7. It participates in metabolic intermediate biosynthesis; chorismate biosynthesis; chorismate from D-erythrose 4-phosphate and phosphoenolpyruvate: step 3/7. Its pathway is metabolic intermediate biosynthesis; chorismate biosynthesis; chorismate from D-erythrose 4-phosphate and phosphoenolpyruvate: step 4/7. The protein operates within metabolic intermediate biosynthesis; chorismate biosynthesis; chorismate from D-erythrose 4-phosphate and phosphoenolpyruvate: step 5/7. It functions in the pathway metabolic intermediate biosynthesis; chorismate biosynthesis; chorismate from D-erythrose 4-phosphate and phosphoenolpyruvate: step 6/7. In terms of biological role, the AROM polypeptide catalyzes 5 consecutive enzymatic reactions in prechorismate polyaromatic amino acid biosynthesis. The sequence is that of Pentafunctional AROM polypeptide from Pyricularia oryzae (strain 70-15 / ATCC MYA-4617 / FGSC 8958) (Rice blast fungus).